A 126-amino-acid chain; its full sequence is C-type natriuretic peptide (126 aa).

The N-terminal stretch at methionine 1–alanine 23 is a signal peptide. Residues arginine 19–leucine 72 are disordered. Residues lysine 24–arginine 73 constitute a propeptide that is removed on maturation. The span at glycine 26–proline 35 shows a compositional bias: pro residues. Residues alanine 46–asparagine 63 show a composition bias toward gly residues. A disulfide bond links cysteine 110 and cysteine 126.

The protein belongs to the natriuretic peptide family. Post-translationally, degraded by IDE (in vitro).

It is found in the secreted. Its function is as follows. Hormone which plays a role in endochondral ossification through regulation of cartilaginous growth plate chondrocytes proliferation and differentiation. May also be vasoactive and natriuretic. Acts by specifically binding and stimulating NPR2 to produce cGMP. Binds the clearance receptor NPR3. This Sus scrofa (Pig) protein is C-type natriuretic peptide (NPPC).